We begin with the raw amino-acid sequence, 170 residues long: Lipoprotein signal peptidase (170 aa).

Helical transmembrane passes span Phe9–Val29, Ile72–Glu92, and Cys95–Phe117. Active-site residues include Asp124 and Asp146. The helical transmembrane segment at Asn143–Ile163 threads the bilayer.

This sequence belongs to the peptidase A8 family.

The protein resides in the cell inner membrane. The enzyme catalyses Release of signal peptides from bacterial membrane prolipoproteins. Hydrolyzes -Xaa-Yaa-Zaa-|-(S,diacylglyceryl)Cys-, in which Xaa is hydrophobic (preferably Leu), and Yaa (Ala or Ser) and Zaa (Gly or Ala) have small, neutral side chains.. It participates in protein modification; lipoprotein biosynthesis (signal peptide cleavage). Functionally, this protein specifically catalyzes the removal of signal peptides from prolipoproteins. The chain is Lipoprotein signal peptidase from Borrelia garinii subsp. bavariensis (strain ATCC BAA-2496 / DSM 23469 / PBi) (Borreliella bavariensis).